The sequence spans 434 residues: Trigger factor 2 (434 aa).

The region spanning 164–247 is the PPIase FKBP-type domain; it reads GDTVTVDYDC…VKKVERIEIL (84 aa).

This sequence belongs to the FKBP-type PPIase family. Tig subfamily.

It is found in the cytoplasm. The enzyme catalyses [protein]-peptidylproline (omega=180) = [protein]-peptidylproline (omega=0). In terms of biological role, involved in protein export. Acts as a chaperone by maintaining the newly synthesized protein in an open conformation. Functions as a peptidyl-prolyl cis-trans isomerase. This chain is Trigger factor 2, found in Desulfitobacterium hafniense (strain Y51).